The primary structure comprises 124 residues: Large ribosomal subunit protein bL12 (124 aa).

Positions alanine 94–lysine 124 are disordered.

Belongs to the bacterial ribosomal protein bL12 family. As to quaternary structure, homodimer. Part of the ribosomal stalk of the 50S ribosomal subunit. Forms a multimeric L10(L12)X complex, where L10 forms an elongated spine to which 2 to 4 L12 dimers bind in a sequential fashion. Binds GTP-bound translation factors.

In terms of biological role, forms part of the ribosomal stalk which helps the ribosome interact with GTP-bound translation factors. Is thus essential for accurate translation. This Paraburkholderia phytofirmans (strain DSM 17436 / LMG 22146 / PsJN) (Burkholderia phytofirmans) protein is Large ribosomal subunit protein bL12.